The following is a 259-amino-acid chain: MLWGESMEEIVNKITKFIREKVEEANANGVVVGLSGGIDSSVTAYLCVKALGKDKVLGLIMPEKNTNPKDVEHAKMVAENLGIKYIISDITDILKAFGAGGYVPTREFDKIADGNLKARIRMCILYYFANKYNLLVAGTSNKSEIYVGYGTKHGDIACDIRPIGNLFKTEVKKLAKYIGVPKEIIEKPPSAGLWEGQTDEEELDIKYETLDTILKLYEKGKTPEEIHKETNIPLETINYVFDLIKKNEHKRTLPPTPEI.

33-40 serves as a coordination point for ATP; sequence GLSGGIDS. Asp-39 is a Mg(2+) binding site. Residue Arg-119 participates in deamido-NAD(+) binding. Thr-139 serves as a coordination point for ATP. Glu-144 provides a ligand contact to Mg(2+). Deamido-NAD(+) is bound by residues Lys-152 and Asp-159. 2 residues coordinate ATP: Lys-168 and Ser-190. Residue 249-250 participates in deamido-NAD(+) binding; sequence HK.

Belongs to the NAD synthetase family. Homodimer.

The catalysed reaction is deamido-NAD(+) + NH4(+) + ATP = AMP + diphosphate + NAD(+) + H(+). Its pathway is cofactor biosynthesis; NAD(+) biosynthesis; NAD(+) from deamido-NAD(+) (ammonia route): step 1/1. In terms of biological role, catalyzes the ATP-dependent amidation of deamido-NAD to form NAD. Uses ammonia as a nitrogen source. The protein is NH(3)-dependent NAD(+) synthetase of Methanocaldococcus jannaschii (strain ATCC 43067 / DSM 2661 / JAL-1 / JCM 10045 / NBRC 100440) (Methanococcus jannaschii).